We begin with the raw amino-acid sequence, 414 residues long: TAR DNA-binding protein 43 (414 aa).

Glycyl lysine isopeptide (Lys-Gly) (interchain with G-Cter in SUMO2) cross-links involve residues Lys-79, Lys-84, Lys-95, Lys-102, and Lys-181. 2 RRM domains span residues 104–200 (SDLI…RCTE) and 191–262 (RKVF…NAEP). Phosphoserine is present on Ser-183. An interaction with UBQLN2 region spans residues 216–414 (EVVDVFIPKP…MDSKSSGWGM (199 aa)). A compositionally biased stretch (basic and acidic residues) spans 261 to 274 (EPKHNSNRQLERSG). Disordered stretches follow at residues 261 to 301 (EPKH…GLGN) and 341 to 414 (ASQQ…GWGM). Residue Lys-263 forms a Glycyl lysine isopeptide (Lys-Gly) (interchain with G-Cter in SUMO2) linkage. Positions 275–301 (RFGGNPGGFGNQGGFGNSRGGGAGLGN) are enriched in gly residues. Ser-292 carries the post-translational modification Phosphoserine. Arg-293 carries the post-translational modification Omega-N-methylarginine. Low complexity-rich tracts occupy residues 342 to 358 (SQQN…SQGS) and 368 to 392 (GSGN…SNAG). Residues 393–402 (SGSGFNGGFG) are compositionally biased toward gly residues. Polar residues predominate over residues 405–414 (MDSKSSGWGM).

As to quaternary structure, homodimer. Homooligomer (via its N-terminal domain). Interacts with BRDT. Binds specifically to pyrimidine-rich motifs of TAR DNA and to single stranded TG repeated sequences. Binds to RNA, specifically to UG repeated sequences with a minimum of six contiguous repeats. Interacts with ATXN2; the interaction is RNA-dependent. Interacts with MATR3. Interacts with UBQLN2. Interacts with HNRNPA2B1. Interacts with ZNF106. Interacts with CNOT7/CAF1. Interacts with CRY2. Interacts with PPIA/CYPA; the interaction is dependent on RNA-binding activity of TARDBP and PPIase activity of PPIA/CYPA. Acetylation of PPIA/CYPA at 'Lys-125' favors the interaction of TARDBP with PPIA/CYPA. In terms of processing, hyperphosphorylated. Post-translationally, ubiquitinated.

The protein resides in the nucleus. It is found in the cytoplasm. It localises to the stress granule. Its subcellular location is the mitochondrion. In terms of biological role, RNA-binding protein that is involved in various steps of RNA biogenesis and processing. Preferentially binds, via its two RNA recognition motifs RRM1 and RRM2, to GU-repeats on RNA molecules predominantly localized within long introns and in the 3'UTR of mRNAs. In turn, regulates the splicing of many non-coding and protein-coding RNAs including proteins involved in neuronal survival, as well as mRNAs that encode proteins relevant for neurodegenerative diseases. Plays a role in maintaining mitochondrial homeostasis by regulating the processing of mitochondrial transcripts. Also regulates mRNA stability by recruiting CNOT7/CAF1 deadenylase on mRNA 3'UTR leading to poly(A) tail deadenylation and thus shortening. In response to oxidative insult, associates with stalled ribosomes localized to stress granules (SGs) and contributes to cell survival. Also participates in the normal skeletal muscle formation and regeneration, forming cytoplasmic myo-granules and binding mRNAs that encode sarcomeric proteins. Plays a role in the maintenance of the circadian clock periodicity via stabilization of the CRY1 and CRY2 proteins in a FBXL3-dependent manner. Negatively regulates the expression of CDK6. Regulates the expression of HDAC6, ATG7 and VCP in a PPIA/CYPA-dependent manner. This chain is TAR DNA-binding protein 43 (Tardbp), found in Mus musculus (Mouse).